An 85-amino-acid chain; its full sequence is 4-hydroxyphenylacetate decarboxylase small subunit (85 aa).

Residues His4, Cys7, Cys20, Cys34, Cys43, Cys46, Cys60, and Cys78 each coordinate [4Fe-4S] cluster.

Belongs to the HPA decarboxylase small subunit family. As to quaternary structure, heterooctamer consisting of 4 large (HpdB) subunits and 4 small (HpdC) subunits, arranged as a tetramer of heterodimers. [4Fe-4S] cluster serves as cofactor.

The catalysed reaction is 4-hydroxyphenylacetate + H(+) = 4-methylphenol + CO2. It carries out the reaction 3,4-dihydroxyphenylacetate + H(+) = 4-methylcatechol + CO2. In terms of biological role, component of the HPA decarboxylase that decarboxylates phenylacetates with a hydroxyl group in the p-position. Active toward 4-hydroxyphenylacetate and 3,4-dihydroxyphenylacetate, forming 4-methylphenol and 4-methylcatechol, respectively. Is likely involved in the catabolism of aromatic amino acids such as tyrosine fermentation. 4-methylphenol (p-cresol) formation provides metabolic toxicity, which allows an active suppression of other microbes and may provide growth advantages for the producers in highly competitive environments. The small subunit is essential for enzymatic activity of HPA decarboxylase, and also seems to be involved in the regulation of the enzyme oligomeric state and catalytic activity. This Clostridioides difficile (strain 630) (Peptoclostridium difficile) protein is 4-hydroxyphenylacetate decarboxylase small subunit.